An 809-amino-acid chain; its full sequence is G-type lectin S-receptor-like serine/threonine-protein kinase At1g61480 (809 aa).

An N-terminal signal peptide occupies residues 1–24 (MGKKRIMFFASLLLITIFLSFSYA). In terms of domain architecture, Bulb-type lectin spans 25 to 144 (GITRESPLSI…NSGRTLWESF (120 aa)). The Extracellular segment spans residues 25 to 425 (GITRESPLSI…SELGGNKRNK (401 aa)). 7 N-linked (GlcNAc...) asparagine glycosylation sites follow: N53, N88, N94, N103, N117, N134, and N236. The EGF-like domain maps to 278-314 (PENSCDIYGFCGPFGICVMSVPPKCKCFKGFVPKSIE). Disulfide bonds link C282/C294 and C288/C302. N-linked (GlcNAc...) asparagine glycans are attached at residues N320 and N375. The PAN domain maps to 333-415 (CQGNTNGKTV…GEILSIRLAS (83 aa)). Intrachain disulfides connect C368/C389 and C372/C378. A helical membrane pass occupies residues 426–446 (IIVASIVSLSLFVILAFAAFC). At 447-809 (FLRYKVKHTV…EMTQSVILGR (363 aa)) the chain is on the cytoplasmic side. In terms of domain architecture, Protein kinase spans 496–781 (FSLSNKLGQG…DLTSPKQPTF (286 aa)). ATP is bound by residues 502–510 (LGQGGFGSV) and K524. Phosphoserine occurs at positions 530 and 545. The caM-binding stretch occupies residues 585–602 (RKRLEIDWPKRFNIIEGI). D621 (proton acceptor) is an active-site residue. 2 positions are modified to phosphoserine: S625 and S638. Residue T655 is modified to Phosphothreonine. Residues S698 and S792 each carry the phosphoserine modification.

Belongs to the protein kinase superfamily. Ser/Thr protein kinase family.

The protein resides in the cell membrane. The catalysed reaction is L-seryl-[protein] + ATP = O-phospho-L-seryl-[protein] + ADP + H(+). The enzyme catalyses L-threonyl-[protein] + ATP = O-phospho-L-threonyl-[protein] + ADP + H(+). The chain is G-type lectin S-receptor-like serine/threonine-protein kinase At1g61480 from Arabidopsis thaliana (Mouse-ear cress).